A 477-amino-acid polypeptide reads, in one-letter code: Sulfate adenylyltransferase subunit 1 (477 aa).

The 218-residue stretch at 22–239 folds into the tr-type G domain; it reads KDMLRFITCG…TVQISHDAPL (218 aa). A G1 region spans residues 31 to 38; that stretch reads GSVDDGKS. 31-38 is a GTP binding site; the sequence is GSVDDGKS. The G2 stretch occupies residues 89–93; the sequence is GITID. The tract at residues 110 to 113 is G3; that stretch reads DCPG. GTP-binding positions include 110-114 and 165-168; these read DCPGH and NKMD. Residues 165–168 form a G4 region; it reads NKMD. A G5 region spans residues 202-204; it reads SAL.

It belongs to the TRAFAC class translation factor GTPase superfamily. Classic translation factor GTPase family. CysN/NodQ subfamily. In terms of assembly, heterodimer composed of CysD, the smaller subunit, and CysN.

The enzyme catalyses sulfate + ATP + H(+) = adenosine 5'-phosphosulfate + diphosphate. Its pathway is sulfur metabolism; hydrogen sulfide biosynthesis; sulfite from sulfate: step 1/3. Functionally, with CysD forms the ATP sulfurylase (ATPS) that catalyzes the adenylation of sulfate producing adenosine 5'-phosphosulfate (APS) and diphosphate, the first enzymatic step in sulfur assimilation pathway. APS synthesis involves the formation of a high-energy phosphoric-sulfuric acid anhydride bond driven by GTP hydrolysis by CysN coupled to ATP hydrolysis by CysD. This Chromobacterium violaceum (strain ATCC 12472 / DSM 30191 / JCM 1249 / CCUG 213 / NBRC 12614 / NCIMB 9131 / NCTC 9757 / MK) protein is Sulfate adenylyltransferase subunit 1.